A 380-amino-acid chain; its full sequence is Chaperone protein DnaJ (380 aa).

Positions 4–68 (DFYSVLGVSR…EKRRMYDQMG (65 aa)) constitute a J domain. A compositionally biased stretch (basic and acidic residues) spans 27-87 (KASEYHPDVS…RGATDTDRGR (61 aa)). Residues 27 to 126 (KASEYHPDVS…SRSGPRQGSD (100 aa)) are disordered. The span at 88–100 (GGMGGMGGGGMGG) shows a compositional bias: gly residues. The segment covering 115–124 (SQSRSGPRQG) has biased composition (low complexity). A CR-type zinc finger spans residues 141 to 223 (GVTKQLTVTR…CRGDGQVRNE (83 aa)). Zn(2+)-binding residues include Cys-154, Cys-157, Cys-171, Cys-174, Cys-197, Cys-200, Cys-211, and Cys-214. CXXCXGXG motif repeat units follow at residues 154–161 (CPDCDGAG), 171–178 (CSACDGRG), 197–204 (CPQCDGKG), and 211–218 (CSTCRGDG).

Belongs to the DnaJ family. In terms of assembly, homodimer. The cofactor is Zn(2+).

It is found in the cytoplasm. Functionally, participates actively in the response to hyperosmotic and heat shock by preventing the aggregation of stress-denatured proteins and by disaggregating proteins, also in an autonomous, DnaK-independent fashion. Unfolded proteins bind initially to DnaJ; upon interaction with the DnaJ-bound protein, DnaK hydrolyzes its bound ATP, resulting in the formation of a stable complex. GrpE releases ADP from DnaK; ATP binding to DnaK triggers the release of the substrate protein, thus completing the reaction cycle. Several rounds of ATP-dependent interactions between DnaJ, DnaK and GrpE are required for fully efficient folding. Also involved, together with DnaK and GrpE, in the DNA replication of plasmids through activation of initiation proteins. This is Chaperone protein DnaJ from Natronomonas pharaonis (strain ATCC 35678 / DSM 2160 / CIP 103997 / JCM 8858 / NBRC 14720 / NCIMB 2260 / Gabara) (Halobacterium pharaonis).